The sequence spans 271 residues: Glutamate racemase (271 aa).

Substrate is bound by residues 10-11 and 42-43; these read DS and YG. Cys73 serves as the catalytic Proton donor/acceptor. 74-75 contributes to the substrate binding site; the sequence is NS. Residue Cys183 is the Proton donor/acceptor of the active site. Residue 184–185 coordinates substrate; that stretch reads TH.

It belongs to the aspartate/glutamate racemases family.

It catalyses the reaction L-glutamate = D-glutamate. It participates in cell wall biogenesis; peptidoglycan biosynthesis. Provides the (R)-glutamate required for cell wall biosynthesis. This chain is Glutamate racemase, found in Saccharopolyspora erythraea (strain ATCC 11635 / DSM 40517 / JCM 4748 / NBRC 13426 / NCIMB 8594 / NRRL 2338).